Here is a 176-residue protein sequence, read N- to C-terminus: Lipoprotein signal peptidase (176 aa).

4 consecutive transmembrane segments (helical) span residues 26-46, 57-77, 82-102, and 111-131; these read LWLAFALLVVLLDQFFKIVIV, VTGFFNLVLVYNKGAAFSFLA, WQRWFFTGLGVVVGAFIVWLL, and FCFAVSLILGGAVGNVVDRVI. Catalysis depends on residues D137 and D155. A helical membrane pass occupies residues 147-167; it reads HWPAFNVADCAITVGAVLLIV.

The protein belongs to the peptidase A8 family.

The protein resides in the cell inner membrane. It catalyses the reaction Release of signal peptides from bacterial membrane prolipoproteins. Hydrolyzes -Xaa-Yaa-Zaa-|-(S,diacylglyceryl)Cys-, in which Xaa is hydrophobic (preferably Leu), and Yaa (Ala or Ser) and Zaa (Gly or Ala) have small, neutral side chains.. Its pathway is protein modification; lipoprotein biosynthesis (signal peptide cleavage). In terms of biological role, this protein specifically catalyzes the removal of signal peptides from prolipoproteins. In Cupriavidus taiwanensis (strain DSM 17343 / BCRC 17206 / CCUG 44338 / CIP 107171 / LMG 19424 / R1) (Ralstonia taiwanensis (strain LMG 19424)), this protein is Lipoprotein signal peptidase.